We begin with the raw amino-acid sequence, 219 residues long: MVKYFLGQSVLRSSWDQVFAAFWQRYPNPYSKHVLTEDIVHREVTPDQKLLSRRLLTKTNRMPRWAERLFPANVAHSVYVLEDSIVDPQNQTMTTFTWNINHARLMVVEERCVYCVNSDNSGWTEIRREAWVSSSLFGVSRAVQEFGLARFKSNVTKTMKGFEYILAKLQGEAPSKTLVETAKEAKEKAKETALAATEKAKDLASKAATKKQQQQQQFV.

In terms of domain architecture, PRELI/MSF1 spans 36–174; sequence TEDIVHREVT…ILAKLQGEAP (139 aa).

As to quaternary structure, forms a complex with TRIAP1 in the mitochondrion intermembrane space. Interacts with OPA1 and AIFM1. Highly expressed in fetal liver; less expressed in fetal brain, lung, and kidney. At the adult stage, expression is drastically reduced in the liver but highly expressed in the spleen, brain, lung, lymph nodes and peripheral blood leukocytes.

Its subcellular location is the mitochondrion. It localises to the mitochondrion intermembrane space. The enzyme catalyses a 1,2-diacyl-sn-glycero-3-phosphate(in) = a 1,2-diacyl-sn-glycero-3-phosphate(out). Involved in the modulation of the mitochondrial apoptotic pathway by ensuring the accumulation of cardiolipin (CL) in mitochondrial membranes. In vitro, the TRIAP1:PRELID1 complex mediates the transfer of phosphatidic acid (PA) between liposomes and probably functions as a PA transporter across the mitochondrion intermembrane space to provide PA for CL synthesis in the inner membrane. Regulates the mitochondrial apoptotic pathway in primary Th cells. Regulates Th cell differentiation by down-regulating STAT6 thereby reducing IL-4-induced Th2 cell number. May be important for the development of vital and immunocompetent organs. This is PRELI domain-containing protein 1, mitochondrial (PRELID1) from Homo sapiens (Human).